The following is a 363-amino-acid chain: Peptide chain release factor 2 (363 aa).

Residue Gln-251 is modified to N5-methylglutamine.

This sequence belongs to the prokaryotic/mitochondrial release factor family. In terms of processing, methylated by PrmC. Methylation increases the termination efficiency of RF2.

Its subcellular location is the cytoplasm. Peptide chain release factor 2 directs the termination of translation in response to the peptide chain termination codons UGA and UAA. This chain is Peptide chain release factor 2, found in Helicobacter pylori (strain G27).